Here is a 248-residue protein sequence, read N- to C-terminus: 2,3-bisphosphoglycerate-dependent phosphoglycerate mutase (248 aa).

Substrate contacts are provided by residues 8–15, 21–22, Arg60, 87–90, Lys98, 114–115, and 183–184; these read RHGESTWN, TG, ERHY, RR, and GN. His9 acts as the Tele-phosphohistidine intermediate in catalysis. Catalysis depends on Glu87, which acts as the Proton donor/acceptor.

Belongs to the phosphoglycerate mutase family. BPG-dependent PGAM subfamily. As to quaternary structure, homodimer.

It carries out the reaction (2R)-2-phosphoglycerate = (2R)-3-phosphoglycerate. The protein operates within carbohydrate degradation; glycolysis; pyruvate from D-glyceraldehyde 3-phosphate: step 3/5. In terms of biological role, catalyzes the interconversion of 2-phosphoglycerate and 3-phosphoglycerate. The protein is 2,3-bisphosphoglycerate-dependent phosphoglycerate mutase of Burkholderia lata (strain ATCC 17760 / DSM 23089 / LMG 22485 / NCIMB 9086 / R18194 / 383).